Reading from the N-terminus, the 447-residue chain is 3-phosphoshikimate 1-carboxyvinyltransferase 2 (447 aa).

3-phosphoshikimate-binding residues include Lys40, Ser41, and Arg45. Lys40 contributes to the phosphoenolpyruvate binding site. Positions 109 and 138 each coordinate phosphoenolpyruvate. Ser184, Ser185, Gln186, Asp329, and His356 together coordinate 3-phosphoshikimate. A phosphoenolpyruvate-binding site is contributed by Gln186. Asp329 functions as the Proton acceptor in the catalytic mechanism. Residues Arg360, Arg403, and Lys428 each coordinate phosphoenolpyruvate.

It belongs to the EPSP synthase family. In terms of assembly, monomer.

It localises to the cytoplasm. It carries out the reaction 3-phosphoshikimate + phosphoenolpyruvate = 5-O-(1-carboxyvinyl)-3-phosphoshikimate + phosphate. It participates in metabolic intermediate biosynthesis; chorismate biosynthesis; chorismate from D-erythrose 4-phosphate and phosphoenolpyruvate: step 6/7. Catalyzes the transfer of the enolpyruvyl moiety of phosphoenolpyruvate (PEP) to the 5-hydroxyl of shikimate-3-phosphate (S3P) to produce enolpyruvyl shikimate-3-phosphate and inorganic phosphate. This Halalkalibacterium halodurans (strain ATCC BAA-125 / DSM 18197 / FERM 7344 / JCM 9153 / C-125) (Bacillus halodurans) protein is 3-phosphoshikimate 1-carboxyvinyltransferase 2.